A 530-amino-acid polypeptide reads, in one-letter code: Autoinducer-2 kinase (530 aa).

Belongs to the FGGY kinase family.

The protein resides in the cytoplasm. The enzyme catalyses (S)-4,5-dihydroxypentane-2,3-dione + ATP = (2S)-2-hydroxy-3,4-dioxopentyl phosphate + ADP + H(+). Functionally, catalyzes the phosphorylation of autoinducer-2 (AI-2) to phospho-AI-2, which subsequently inactivates the transcriptional regulator LsrR and leads to the transcription of the lsr operon. Phosphorylates the ring-open form of (S)-4,5-dihydroxypentane-2,3-dione (DPD), which is the precursor to all AI-2 signaling molecules, at the C5 position. The chain is Autoinducer-2 kinase from Yersinia pestis bv. Antiqua (strain Angola).